Reading from the N-terminus, the 218-residue chain is Large ribosomal subunit protein bL25 (218 aa).

It belongs to the bacterial ribosomal protein bL25 family. CTC subfamily. Part of the 50S ribosomal subunit; part of the 5S rRNA/L5/L18/L25 subcomplex. Contacts the 5S rRNA. Binds to the 5S rRNA independently of L5 and L18.

Functionally, this is one of the proteins that binds to the 5S RNA in the ribosome where it forms part of the central protuberance. The polypeptide is Large ribosomal subunit protein bL25 (Gluconobacter oxydans (strain 621H) (Gluconobacter suboxydans)).